We begin with the raw amino-acid sequence, 161 residues long: Cytidylate kinase (161 aa).

7-15 provides a ligand contact to ATP; it reads GLAGTGTTT.

It belongs to the cytidylate kinase family. Type 2 subfamily.

The protein resides in the cytoplasm. The enzyme catalyses CMP + ATP = CDP + ADP. The catalysed reaction is dCMP + ATP = dCDP + ADP. This is Cytidylate kinase (cmk) from Methanothermobacter thermautotrophicus (strain ATCC 29096 / DSM 1053 / JCM 10044 / NBRC 100330 / Delta H) (Methanobacterium thermoautotrophicum).